A 1050-amino-acid chain; its full sequence is Integrin alpha-5 (1050 aa).

Residues Met1–Gly32 form the signal peptide. At Phe33–Tyr996 the chain is on the extracellular side. FG-GAP repeat units follow at residues Asn34–Cys99, Asp116–Thr175, Arg183–Tyr235, Gln249–Leu301, Arg302–Thr367, Pro368–Ser426, and Gln430–Asn493. Residues Asn75, Asn95, and Asn98 are each glycosylated (N-linked (GlcNAc...) asparagine). 2 cysteine pairs are disulfide-bonded: Cys90–Cys99 and Cys145–Cys166. An N-linked (GlcNAc...) asparagine glycan is attached at Asn172. The cysteines at positions 182 and 195 are disulfide-linked. Ca(2+) contacts are provided by Glu270, Ser272, Asp274, Thr276, and Asp278. N-linked (GlcNAc...) asparagine glycans are attached at residues Asn287, Asn297, and Asn306. Ca(2+) contacts are provided by Asp324, Asn326, Asp328, Leu330, Asp332, Asp390, Asp392, Asp394, Asp398, Asp454, Asp456, Asn458, Tyr460, and Asp462. Cys502 and Cys513 form a disulfide bridge. Residues Asn507, Asn515, Asn521, and Asn600 are each glycosylated (N-linked (GlcNAc...) asparagine). A disulfide bridge links Cys519 with Cys575. A disulfide bond links Cys636 and Cys642. N-linked (GlcNAc...) asparagine glycosylation is found at Asn649, Asn714, Asn763, and Asn861. A disulfide bridge connects residues Cys708 and Cys721. 3 disulfide bridges follow: Cys839–Cys958, Cys862–Cys922, and Cys910–Cys917. The chain crosses the membrane as a helical span at residues Gly997 to Tyr1022. The Cytoplasmic segment spans residues Lys1023–Ala1050. A GFFKR motif motif is present at residues Gly1025–Arg1029.

It belongs to the integrin alpha chain family. As to quaternary structure, heterodimer of an alpha and a beta subunit. The alpha subunit is composed of a heavy and a light chain linked by a disulfide bond. Alpha-5 associates with beta-1.

Its subcellular location is the cell membrane. It is found in the cell junction. It localises to the focal adhesion. In terms of biological role, integrin alpha-5/beta-1 (ITGA5:ITGB1) is a receptor for fibronectin. It recognizes the sequence R-G-D in its ligands. ITGA5:ITGB1 acts as a receptor for fibrillin-1 (FBN1) and mediates R-G-D-dependent cell adhesion to FBN1. ITGA5:ITGB1 acts as a receptor for fibronectin (FN1) and mediates R-G-D-dependent cell adhesion to FN1. ITGA5:ITGB1 is a receptor for IL1B and binding is essential for IL1B signaling. ITGA5:ITGB3 is a receptor for soluble CD40LG and is required for CD40/CD40LG signaling. The polypeptide is Integrin alpha-5 (itga5) (Xenopus laevis (African clawed frog)).